A 380-amino-acid chain; its full sequence is Cytochrome b (380 aa).

4 consecutive transmembrane segments (helical) span residues 34–54 (FGSLLGICLATQILTGLLLAM), 78–99 (WLIRNLHANGASFFFICVYLHI), 114–134 (WNTGILLLLTLMATAFVGYVL), and 179–199 (FFALHFLLPFAIAGLTLIHLT). Heme b is bound by residues His-84 and His-98. Heme b-binding residues include His-183 and His-197. A ubiquinone is bound at residue His-202. A run of 4 helical transmembrane segments spans residues 227–247 (LKDALGFMLMFLPLTTLALFS), 289–309 (LGGVLALAASVLILFLSPLLH), 321–341 (LSQLLFWTLVANLFILTWVGS), and 348–368 (FIIIGQLASLTYFTILLILFP).

It belongs to the cytochrome b family. In terms of assembly, the cytochrome bc1 complex contains 11 subunits: 3 respiratory subunits (MT-CYB, CYC1 and UQCRFS1), 2 core proteins (UQCRC1 and UQCRC2) and 6 low-molecular weight proteins (UQCRH/QCR6, UQCRB/QCR7, UQCRQ/QCR8, UQCR10/QCR9, UQCR11/QCR10 and a cleavage product of UQCRFS1). This cytochrome bc1 complex then forms a dimer. It depends on heme b as a cofactor.

The protein localises to the mitochondrion inner membrane. Component of the ubiquinol-cytochrome c reductase complex (complex III or cytochrome b-c1 complex) that is part of the mitochondrial respiratory chain. The b-c1 complex mediates electron transfer from ubiquinol to cytochrome c. Contributes to the generation of a proton gradient across the mitochondrial membrane that is then used for ATP synthesis. The chain is Cytochrome b (MT-CYB) from Oceanites oceanicus (Wilson's storm petrel).